We begin with the raw amino-acid sequence, 309 residues long: uncharacterized protein (309 aa).

The segment covering 1 to 16 has biased composition (basic residues); it reads MAGNSRRRGAVRKAGT. Positions 1–70 are disordered; the sequence is MAGNSRRRGA…AKRTEETETV (70 aa). Residues Gly-261, Ile-281, and Leu-290 each contribute to the S-adenosyl-L-methionine site.

It belongs to the class IV-like SAM-binding methyltransferase superfamily. RNA methyltransferase TrmH family.

This is an uncharacterized protein from Mycolicibacterium paratuberculosis (strain ATCC BAA-968 / K-10) (Mycobacterium paratuberculosis).